Here is a 177-residue protein sequence, read N- to C-terminus: ATP synthase subunit delta (177 aa).

Belongs to the ATPase delta chain family. As to quaternary structure, F-type ATPases have 2 components, F(1) - the catalytic core - and F(0) - the membrane proton channel. F(1) has five subunits: alpha(3), beta(3), gamma(1), delta(1), epsilon(1). F(0) has three main subunits: a(1), b(2) and c(10-14). The alpha and beta chains form an alternating ring which encloses part of the gamma chain. F(1) is attached to F(0) by a central stalk formed by the gamma and epsilon chains, while a peripheral stalk is formed by the delta and b chains.

The protein localises to the cell inner membrane. In terms of biological role, f(1)F(0) ATP synthase produces ATP from ADP in the presence of a proton or sodium gradient. F-type ATPases consist of two structural domains, F(1) containing the extramembraneous catalytic core and F(0) containing the membrane proton channel, linked together by a central stalk and a peripheral stalk. During catalysis, ATP synthesis in the catalytic domain of F(1) is coupled via a rotary mechanism of the central stalk subunits to proton translocation. Functionally, this protein is part of the stalk that links CF(0) to CF(1). It either transmits conformational changes from CF(0) to CF(1) or is implicated in proton conduction. This Neisseria meningitidis serogroup B (strain ATCC BAA-335 / MC58) protein is ATP synthase subunit delta.